A 440-amino-acid chain; its full sequence is RUN domain-containing protein 3A (440 aa).

In terms of domain architecture, RUN spans 52 to 184; the sequence is DDSSEEFVNF…IDFSFCLKGE (133 aa). Residues 213–233 form a disordered region; sequence DDRESVGGSSSEDSSPEHPYL. A coiled-coil region spans residues 262–317; it reads YLEELVRLRETQLKNLEAENKRLTQRISEQAEQSLQEKHQLEGVILELQEQLTGLL. The interval 374–402 is disordered; sequence LSSESQRLDGKQDGEPWGPIGKDPTPSML.

The protein belongs to the RUNDC3 family.

This is RUN domain-containing protein 3A (rundc3a) from Xenopus tropicalis (Western clawed frog).